The chain runs to 173 residues: MAIVLGIDPGSRVTGYGVIRQQGRQLTYLGSGCIRTVVDDMPTRLKLIYAGVTEIITQFQPDFFAIEQVFMAKNPDSALKLGQARGAAIVAAVNLNLPVSEYAARQVKQTVVGTGAAEKSQVQHMVRSLLKLPANPQADAADALAIAITHCHLSQNTLRLGNDQMTLSRGRIR.

Active-site residues include D8, E67, and D139. Mg(2+) contacts are provided by D8, E67, and D139.

It belongs to the RuvC family. As to quaternary structure, homodimer which binds Holliday junction (HJ) DNA. The HJ becomes 2-fold symmetrical on binding to RuvC with unstacked arms; it has a different conformation from HJ DNA in complex with RuvA. In the full resolvosome a probable DNA-RuvA(4)-RuvB(12)-RuvC(2) complex forms which resolves the HJ. The cofactor is Mg(2+).

The protein resides in the cytoplasm. It carries out the reaction Endonucleolytic cleavage at a junction such as a reciprocal single-stranded crossover between two homologous DNA duplexes (Holliday junction).. The RuvA-RuvB-RuvC complex processes Holliday junction (HJ) DNA during genetic recombination and DNA repair. Endonuclease that resolves HJ intermediates. Cleaves cruciform DNA by making single-stranded nicks across the HJ at symmetrical positions within the homologous arms, yielding a 5'-phosphate and a 3'-hydroxyl group; requires a central core of homology in the junction. The consensus cleavage sequence is 5'-(A/T)TT(C/G)-3'. Cleavage occurs on the 3'-side of the TT dinucleotide at the point of strand exchange. HJ branch migration catalyzed by RuvA-RuvB allows RuvC to scan DNA until it finds its consensus sequence, where it cleaves and resolves the cruciform DNA. This chain is Crossover junction endodeoxyribonuclease RuvC, found in Yersinia pseudotuberculosis serotype O:1b (strain IP 31758).